The primary structure comprises 278 residues: Adenylate kinase (278 aa).

Position 50–55 (50–55 (GAGKGT)) interacts with ATP. The NMP stretch occupies residues 70–99 (ATGDMLRAQVAKGTALGKQAKKIMNEGGLV). AMP is bound by residues threonine 71, arginine 76, 97–99 (GLV), 126–129 (GFPR), and glutamine 133. The LID stretch occupies residues 167-204 (GRLVHPASGRSYHRIFNPPKDDMKDDITGEPLVQRSDD). Residues arginine 168 and 177–178 (SY) each bind ATP. Positions 201 and 212 each coordinate AMP. An ATP-binding site is contributed by glutamine 240.

It belongs to the adenylate kinase family. AK2 subfamily. As to quaternary structure, monomer.

It localises to the cytoplasm. Its subcellular location is the cytosol. The protein resides in the mitochondrion intermembrane space. The catalysed reaction is AMP + ATP = 2 ADP. In terms of biological role, catalyzes the reversible transfer of the terminal phosphate group between ATP and AMP. Plays an important role in cellular energy homeostasis and in adenine nucleotide metabolism. Adenylate kinase activity is critical for regulation of the phosphate utilization and the AMP de novo biosynthesis pathways. The polypeptide is Adenylate kinase (adk-1) (Neurospora crassa (strain ATCC 24698 / 74-OR23-1A / CBS 708.71 / DSM 1257 / FGSC 987)).